The chain runs to 301 residues: MDNSRKYLLNFKGCNFERTLVDMKILEKLDDFEIRDDDVFVITYPKSGTVWTQQILSLIYFEGHRNRTEKWDTLDRVPFLEYNIRKVDIENRPSPRLFASHLPYYLAPKSLKNNKAKIIYVYRNPKDVLISFFHFSNMVVKLEASNTLENFMEKFLDGKVVGSIWFDHIRGWYEHKNDFNILFMMYEDMKKDLRSSILKISSFLEKDLSEEEVDAIVRQATFENMKFIPQANYNNILSNEIGRRHNEGAFLRKGAVGDWKHHMTVEQSERFDRIFQEEMKDFPLKFIWDLNDEANSNHSAK.

46–51 (KSGTVW) serves as a coordination point for 3'-phosphoadenylyl sulfate. His-101 acts as the Proton acceptor in catalysis. 3'-phosphoadenylyl sulfate-binding positions include Arg-123, Ser-131, Tyr-186, 220–225 (ATFENM), and 252–254 (RKG).

It belongs to the sulfotransferase 1 family. In terms of tissue distribution, expressed in male liver.

The protein localises to the cytoplasm. The enzyme catalyses a primary amine + 3'-phosphoadenylyl sulfate = a sulfamate + adenosine 3',5'-bisphosphate + 2 H(+). Its function is as follows. Sulfotransferase that utilizes 3'-phospho-5'-adenylyl sulfate (PAPS) as sulfonate donor to catalyze the N-sulfonation of amines (PTHP, aniline, 4-chloroaniline, 2-naphthylamine). The sequence is that of Amine sulfotransferase (SULT3A1) from Oryctolagus cuniculus (Rabbit).